Reading from the N-terminus, the 527-residue chain is Cytochrome P450 monooxygenase olcJ (527 aa).

A helical membrane pass occupies residues glycine 21–histidine 43. Cysteine 464 contacts heme.

This sequence belongs to the cytochrome P450 family. Requires heme as cofactor.

Its subcellular location is the membrane. Its pathway is secondary metabolite biosynthesis; terpenoid biosynthesis. Functionally, cytochrome P450 monooxygenase; part of the gene cluster that mediates the biosynthesis of 15-deoxyoxalicine B. The first step of the pathway is the synthesis of nicotinyl-CoA from nicotinic acid by the nicotinic acid-CoA ligase olcI. Nicotinyl-CoA is then a substrate of polyketide synthase olcA to produce 4-hydroxy-6-(3-pyridinyl)-2H-pyran-2-one (HPPO) which is further prenylated by the polyprenyl transferase olcH to yield geranylgeranyl-HPPO. Geranylgeranyl pyrophosphate is provided by the cluster-specific geranylgeranyl pyrophosphate synthase olcC. The FAD-dependent monooxygenase olcE catalyzes the epoxidation of geranylgeranyl-HPPO and the terpene cyclase olcD catalyzes the cyclization of the terpenoid component, resulting in the formation of the tricyclic terpene moiety seen in predecaturin E. The cytochrome P450 monooxygenase then catalyzes the allylic oxidation of predecaturin E, which is followed by spirocylization with concomitant loss of one molecule of water to form decaturin E. Decaturin E is the substrate of the cytochrome P450 monooxygenase olcJ which hydroxylates it at the C-29 position to form decaturin F. The short-chain dehydrogenase/reductase olcF may catalyze the oxidation of decaturin F to generate the 29-hydroxyl-27-one intermediate, and subsequent hemiacetal formation probably leads to the formation of decaturin C. The dioxygenase olcK may be a peroxisomal enzyme that catalyzes the hydroxylation of decaturin C into decaturin A once decaturin C is shuttled into the peroxisome by the MFS transporter olcL. Finally the cytochrome P450 monooxygenase olcB catalyzes the oxidative rearrangement to yield 15-deoxyoxalicine B. In the absence of olcJ, decaturin E may be shunted to a pathway in which it is oxidized to a ketone, possibly by olcF, to form decaturin D, which undergoes further allylic oxidation to yield decaturin G. Moreover, in the absence of oclK or oclL, oclB can convert decaturin C into 15-deoxyoxalicine A. This chain is Cytochrome P450 monooxygenase olcJ, found in Penicillium canescens.